The sequence spans 406 residues: FBD-associated F-box protein At1g60410 (406 aa).

In terms of domain architecture, F-box spans 9 to 59; sequence KDRLSDLPCHLLCRILSNLSTKESVRTSVLSPRWSNLWSLVSVLDLDFQDF. The region spanning 355–405 is the FBD domain; it reads MEEIKLSPVPQCVLSSLDFLQLKAPSTPSKMKLATYFRKKCTRLTKMLLSG.

This Arabidopsis thaliana (Mouse-ear cress) protein is FBD-associated F-box protein At1g60410.